A 387-amino-acid chain; its full sequence is Proteinase R (387 aa).

The N-terminal stretch at methionine 1–alanine 21 is a signal peptide. The propeptide occupies valine 22 to asparagine 108. Residues lysine 42–isoleucine 107 form the Inhibitor I9 domain. The Peptidase S8 domain maps to proline 115–glycine 387. Threonine 124 is a binding site for Ca(2+). Intrachain disulfides connect cysteine 142–cysteine 231 and cysteine 286–cysteine 357. Catalysis depends on charge relay system residues aspartate 147 and histidine 177. Aspartate 308 is a binding site for Ca(2+). Residue serine 332 is the Charge relay system of the active site. Aspartate 368 serves as a coordination point for Ca(2+).

It belongs to the peptidase S8 family. Ca(2+) serves as cofactor.

In terms of biological role, serine proteinase. The sequence is that of Proteinase R (PROR) from Parengyodontium album (Tritirachium album).